A 489-amino-acid chain; its full sequence is Arginine biosynthesis bifunctional protein ArgJ 2, mitochondrial (489 aa).

The N-terminal 11 residues, 1-11, are a transit peptide targeting the mitochondrion; sequence MLLISRIGARH. The substrate site is built by T205, K234, T245, E341, and N484. Catalysis depends on T245, which acts as the Nucleophile.

The protein belongs to the ArgJ family. In terms of assembly, heterodimer of an alpha and a beta chain. Post-translationally, the alpha and beta chains are autoproteolytically processed from a single precursor protein within the mitochondrion.

It localises to the mitochondrion matrix. The catalysed reaction is N(2)-acetyl-L-ornithine + L-glutamate = N-acetyl-L-glutamate + L-ornithine. It catalyses the reaction L-glutamate + acetyl-CoA = N-acetyl-L-glutamate + CoA + H(+). It participates in amino-acid biosynthesis; L-arginine biosynthesis; L-ornithine and N-acetyl-L-glutamate from L-glutamate and N(2)-acetyl-L-ornithine (cyclic): step 1/1. It functions in the pathway amino-acid biosynthesis; L-arginine biosynthesis; N(2)-acetyl-L-ornithine from L-glutamate: step 1/4. Its function is as follows. Catalyzes two activities which are involved in the cyclic version of arginine biosynthesis: the synthesis of acetylglutamate from glutamate and acetyl-CoA, and of ornithine by transacetylation between acetylornithine and glutamate. This Sclerotinia sclerotiorum (strain ATCC 18683 / 1980 / Ss-1) (White mold) protein is Arginine biosynthesis bifunctional protein ArgJ 2, mitochondrial.